We begin with the raw amino-acid sequence, 211 residues long: Protein Nef (211 aa).

A lipid anchor (N-myristoyl glycine; by host) is attached at Gly-2. Residue Ser-6 is modified to Phosphoserine; by host. The acidic; interacts with host PACS1 and PACS2; stabilizes the interaction of NEF/MHC-I with host AP1M1; necessary for MHC-I internalization stretch occupies residues 67 to 70 (EDEE). The segment at 74–83 (PVRPQVPLRP) is SH3-binding; interaction with Src family tyrosine kinases. A PxxP; stabilizes the interaction of NEF/MHC-I with host AP1M1; necessary for MHC-I internalization motif is present at residues 77–80 (PQVP). The mediates dimerization, Nef-PTE1 interaction stretch occupies residues 113 to 129 (DILDLWVYHTQGYFPDW). The segment at 153–185 (MDPDQVEEANEGENNSLLHPISLHGMDDPEKEV) is binding to ATP6V1H. Residues 169–170 (LL) carry the Dileucine internalization motif; necessary for CD4 internalization motif. The Diacidic; necessary for CD4 internalization signature appears at 179–180 (DD).

The protein belongs to the lentivirus primate group Nef protein family. Monomer; cytosolic form. Homodimer; membrane bound form. Interacts with Nef associated p21-activated kinase (PAK2); this interaction activates PAK2. Associates with the Nef-MHC-I-AP1 complex; this complex is required for MHC-I internalization. Interacts (via C-terminus) with host PI3-kinase. Interacts with host PACS1; this interaction seems to be weak. Interacts with host PACS2. Interacts with host LCK and MAPK3; these interactions inhibit the kinase activity of the latter. Interacts with host ATP6V1H; this interaction may play a role in CD4 endocytosis. Associates with the CD4-Nef-AP2 complex; this complex is required for CD4 internalization. Interacts with host AP2 subunit alpha and AP2 subunit sigma2. Interacts with TCR-zeta chain; this interaction up-regulates the Fas ligand (FasL) surface expression. Interacts with host HCK, LYN, and SRC; these interactions activate the Src family kinases. Interacts with MAP3K5; this interaction inhibits the Fas and TNFR-mediated death signals. Interacts with beta-COP and PTE1. Interacts with human RACK1; this increases Nef phosphorylation by PKC. Interacts with TP53; this interaction decreases the half-life of TP53, protecting the infected cell against p53-mediated apoptosis. In terms of processing, the virion-associated Nef proteins are cleaved by the viral protease to release the soluble C-terminal core protein. Nef is probably cleaved concomitantly with viral structural proteins on maturation of virus particles. Post-translationally, myristoylated. Phosphorylated on serine residues, probably by host PKCdelta and theta.

Its subcellular location is the host cell membrane. It localises to the virion. The protein resides in the secreted. It is found in the host Golgi apparatus membrane. Its function is as follows. Factor of infectivity and pathogenicity, required for optimal virus replication. Alters numerous pathways of T-lymphocyte function and down-regulates immunity surface molecules in order to evade host defense and increase viral infectivity. Alters the functionality of other immunity cells, like dendritic cells, monocytes/macrophages and NK cells. In infected CD4(+) T-lymphocytes, down-regulates the surface MHC-I, mature MHC-II, CD4, CD28, CCR5 and CXCR4 molecules. Mediates internalization and degradation of host CD4 through the interaction of with the cytoplasmic tail of CD4, the recruitment of AP-2 (clathrin adapter protein complex 2), internalization through clathrin coated pits, and subsequent transport to endosomes and lysosomes for degradation. Diverts host MHC-I molecules to the trans-Golgi network-associated endosomal compartments by an endocytic pathway to finally target them for degradation. MHC-I down-regulation may involve AP-1 (clathrin adapter protein complex 1) or possibly Src family kinase-ZAP70/Syk-PI3K cascade recruited by PACS2. In consequence infected cells are masked for immune recognition by cytotoxic T-lymphocytes. Decreasing the number of immune receptors also prevents reinfection by more HIV particles (superinfection). Down-regulates host SERINC3 and SERINC5 thereby excluding these proteins from the viral particles. Virion infectivity is drastically higher when SERINC3 or SERINC5 are excluded from the viral envelope, because these host antiviral proteins impair the membrane fusion event necessary for subsequent virion penetration. Functionally, bypasses host T-cell signaling by inducing a transcriptional program nearly identical to that of anti-CD3 cell activation. Interaction with TCR-zeta chain up-regulates the Fas ligand (FasL). Increasing surface FasL molecules and decreasing surface MHC-I molecules on infected CD4(+) cells send attacking cytotoxic CD8+ T-lymphocytes into apoptosis. In terms of biological role, plays a role in optimizing the host cell environment for viral replication without causing cell death by apoptosis. Protects the infected cells from apoptosis in order to keep them alive until the next virus generation is ready to strike. Inhibits the Fas and TNFR-mediated death signals by blocking MAP3K5/ASK1. Decreases the half-life of TP53, protecting the infected cell against p53-mediated apoptosis. Inhibits the apoptotic signals regulated by the Bcl-2 family proteins through the formation of a Nef/PI3-kinase/PAK2 complex that leads to activation of PAK2 and induces phosphorylation of host BAD. Its function is as follows. Extracellular Nef protein targets CD4(+) T-lymphocytes for apoptosis by interacting with CXCR4 surface receptors. This chain is Protein Nef, found in Homo sapiens (Human).